The following is a 910-amino-acid chain: Valine--tRNA ligase (910 aa).

A 'HIGH' region motif is present at residues 46–56; the sequence is PNVTGSLHMGH. Positions 539 to 543 match the 'KMSKS' region motif; that stretch reads KMSKS. Lysine 542 contacts ATP. Residues 845 to 909 are a coiled coil; that stretch reads DLDILRNKIQ…QMLQERLKML (65 aa).

The protein belongs to the class-I aminoacyl-tRNA synthetase family. ValS type 1 subfamily. As to quaternary structure, monomer.

It localises to the cytoplasm. The catalysed reaction is tRNA(Val) + L-valine + ATP = L-valyl-tRNA(Val) + AMP + diphosphate. In terms of biological role, catalyzes the attachment of valine to tRNA(Val). As ValRS can inadvertently accommodate and process structurally similar amino acids such as threonine, to avoid such errors, it has a 'posttransfer' editing activity that hydrolyzes mischarged Thr-tRNA(Val) in a tRNA-dependent manner. In Synechocystis sp. (strain ATCC 27184 / PCC 6803 / Kazusa), this protein is Valine--tRNA ligase.